We begin with the raw amino-acid sequence, 109 residues long: Large ribosomal subunit protein uL24 (109 aa).

The protein belongs to the universal ribosomal protein uL24 family. As to quaternary structure, part of the 50S ribosomal subunit.

Functionally, one of two assembly initiator proteins, it binds directly to the 5'-end of the 23S rRNA, where it nucleates assembly of the 50S subunit. In terms of biological role, one of the proteins that surrounds the polypeptide exit tunnel on the outside of the subunit. The sequence is that of Large ribosomal subunit protein uL24 from Rickettsia canadensis (strain McKiel).